Reading from the N-terminus, the 180-residue chain is Large ribosomal subunit protein uL5 (180 aa).

It belongs to the universal ribosomal protein uL5 family. Part of the 50S ribosomal subunit; part of the 5S rRNA/L5/L18/L25 subcomplex. Contacts the 5S rRNA and the P site tRNA. Forms a bridge to the 30S subunit in the 70S ribosome.

Its function is as follows. This is one of the proteins that bind and probably mediate the attachment of the 5S RNA into the large ribosomal subunit, where it forms part of the central protuberance. In the 70S ribosome it contacts protein S13 of the 30S subunit (bridge B1b), connecting the 2 subunits; this bridge is implicated in subunit movement. Contacts the P site tRNA; the 5S rRNA and some of its associated proteins might help stabilize positioning of ribosome-bound tRNAs. The protein is Large ribosomal subunit protein uL5 of Streptococcus mutans serotype c (strain ATCC 700610 / UA159).